The following is a 423-amino-acid chain: uncharacterized protein (423 aa).

Lys181, Asp183, and Glu184 together coordinate Mg(2+). Position 181 is an N6-carboxylysine (Lys181).

The protein belongs to the RuBisCO large chain family. Type IV subfamily. The cofactor is Mg(2+).

May be involved in sulfur metabolism and oxidative stress response. Does not show RuBisCO activity. This is an uncharacterized protein from Bordetella bronchiseptica (strain ATCC BAA-588 / NCTC 13252 / RB50) (Alcaligenes bronchisepticus).